The chain runs to 901 residues: HTH-type transcriptional regulator MalT (901 aa).

39–46 (SPAGYGKT) provides a ligand contact to ATP. An HTH luxR-type domain is found at 829-894 (ELIRTSPLTQ…DAVQHAQQLL (66 aa)). The H-T-H motif DNA-binding region spans 853–872 (NEQIAGELAVAATTIKTHIR).

Belongs to the MalT family. As to quaternary structure, monomer in solution. Oligomerizes to an active state in the presence of the positive effectors ATP and maltotriose.

Its activity is regulated as follows. Activated by ATP and maltotriose, which are both required for DNA binding. Functionally, positively regulates the transcription of the maltose regulon whose gene products are responsible for uptake and catabolism of malto-oligosaccharides. Specifically binds to the promoter region of its target genes, recognizing a short DNA motif called the MalT box. In Salmonella typhimurium (strain LT2 / SGSC1412 / ATCC 700720), this protein is HTH-type transcriptional regulator MalT.